Consider the following 144-residue polypeptide: Large ribosomal subunit protein uL15 (144 aa).

The interval 1-54 (MRLNTLSPAPGRVSAKKRVGRGIGSGLGKTAGRGHKGLKSRSGGSVKPGFEGGQ) is disordered. Positions 21-31 (RGIGSGLGKTA) are enriched in gly residues.

It belongs to the universal ribosomal protein uL15 family. As to quaternary structure, part of the 50S ribosomal subunit.

Functionally, binds to the 23S rRNA. The polypeptide is Large ribosomal subunit protein uL15 (Saccharophagus degradans (strain 2-40 / ATCC 43961 / DSM 17024)).